We begin with the raw amino-acid sequence, 151 residues long: MD-2-related lipid-recognition protein (151 aa).

The N-terminal stretch at 1–18 (MAALHWLLLAALLGCTLA) is a signal peptide. Intrachain disulfides connect Cys27–Cys141, Cys45–Cys51, and Cys95–Cys100. Residue Asn58 is glycosylated (N-linked (GlcNAc...) asparagine).

Post-translationally, N-glycosylated. In terms of tissue distribution, hemolymph (at protein level). Constitutively expressed mainly in fat body and also in hemocytes and secreted into hemolymph. Not detected in midgut, epidermis, or Malpighian tubule of naive larvae.

Its subcellular location is the secreted. Its function is as follows. Binds to lipopolysaccharide from a variety of Gram-negative bacteria and to lipid A. The protein is MD-2-related lipid-recognition protein of Manduca sexta (Tobacco hawkmoth).